A 223-amino-acid polypeptide reads, in one-letter code: UPF0441 protein ETA_04310 (223 aa).

The disordered stretch occupies residues 166 to 223; it reads YGAATPGRTMTVPKSALAPKPATTSTVTRGGFGESVAKQNTMQRNSSSTGSANRSMGG. Over residues 202–223 the composition is skewed to polar residues; sequence AKQNTMQRNSSSTGSANRSMGG.

This sequence belongs to the UPF0441 family.

The protein is UPF0441 protein ETA_04310 of Erwinia tasmaniensis (strain DSM 17950 / CFBP 7177 / CIP 109463 / NCPPB 4357 / Et1/99).